We begin with the raw amino-acid sequence, 2155 residues long: Polyketide synthase 2 (2155 aa).

The segment at 7–244 (FIFGDQTGGF…IPIPIWAPYH (238 aa)) is N-terminal acylcarrier protein transacylase domain (SAT). The region spanning 374-807 (DSKIAIIGMS…GGNSALLLED (434 aa)) is the Ketosynthase family 3 (KS3) domain. Catalysis depends on for beta-ketoacyl synthase activity residues C546, H681, and H723. The tract at residues 908–1213 (GFVFSGQGAQ…ASLHRKDDGW (306 aa)) is malonyl-CoA:ACP transacylase (MAT) domain. The active-site For acyl/malonyl transferase activity is S998. Positions 1290–1605 (TSSVQRIIRQ…RSLLNKVLPP (316 aa)) are product template (PT) domain. The interval 1294-1428 (QRIIRQTDGP…CLLRFADPTS (135 aa)) is N-terminal hotdog fold. In terms of domain architecture, PKS/mFAS DH spans 1294–1600 (QRIIRQTDGP…FLGMSRSLLN (307 aa)). H1327 acts as the Proton acceptor; for dehydratase activity in catalysis. The C-terminal hotdog fold stretch occupies residues 1455-1600 (TDSLLSKGIV…FLGMSRSLLN (146 aa)). D1514 serves as the catalytic Proton donor; for dehydratase activity. Residues 1626-1654 (AASAKDTERRPLDIPTRAQRQPSSPQTGT) are disordered. Residues 1643-1654 (AQRQPSSPQTGT) are compositionally biased toward polar residues. Positions 1649 to 1726 (SPQTGTMGRI…ELKAFLGADQ (78 aa)) constitute a Carrier 1 domain. S1686 is modified (O-(pantetheine 4'-phosphoryl)serine). A disordered region spans residues 1735-1765 (SSIGQHTPQTSDKGSGTLASQKTDGDTGPDT). The span at 1736–1756 (SIGQHTPQTSDKGSGTLASQK) shows a compositional bias: polar residues. In terms of domain architecture, Carrier 2 spans 1764–1838 (DTTLNRVCAI…ALQKALCGSE (75 aa)). S1798 carries the post-translational modification O-(pantetheine 4'-phosphoryl)serine. Positions 1873–2149 (ASPPHATSIL…MVEMGNLIGD (277 aa)) are thioesterase (TE) domain. The active-site For thioesterase activity is the S1979.

Functionally, polyketide synthase; part of the Pks2 gene cluster that mediates the formation of infectious structures (appressoria), enabling these fungi to kill insects faster. The product of the Pks2 gene cluster is different from the one of Pks1 and has still not been identified. The sequence is that of Polyketide synthase 2 from Metarhizium anisopliae (strain ARSEF 549).